Reading from the N-terminus, the 395-residue chain is D-alanine--D-alanine ligase (395 aa).

Residues 172–391 (KVVLDAAGIP…YTELITRLIE (220 aa)) enclose the ATP-grasp domain. 204 to 266 (DAGLTYPLFV…EQGIDGREIE (63 aa)) lines the ATP pocket. Residues Asp345, Glu358, and Asn360 each coordinate Mg(2+).

Belongs to the D-alanine--D-alanine ligase family. The cofactor is Mg(2+). Requires Mn(2+) as cofactor.

It localises to the cytoplasm. It carries out the reaction 2 D-alanine + ATP = D-alanyl-D-alanine + ADP + phosphate + H(+). The protein operates within cell wall biogenesis; peptidoglycan biosynthesis. Cell wall formation. This chain is D-alanine--D-alanine ligase, found in Bifidobacterium longum (strain DJO10A).